Consider the following 54-residue polypeptide: Large ribosomal subunit protein bL33B (54 aa).

The protein belongs to the bacterial ribosomal protein bL33 family.

The sequence is that of Large ribosomal subunit protein bL33B from Saccharopolyspora erythraea (strain ATCC 11635 / DSM 40517 / JCM 4748 / NBRC 13426 / NCIMB 8594 / NRRL 2338).